We begin with the raw amino-acid sequence, 449 residues long: Signal recognition particle protein (449 aa).

Residues 109 to 116 (GLQGGGKT), 191 to 195 (DTAGR), and 249 to 252 (SRID) each bind GTP.

It belongs to the GTP-binding SRP family. SRP54 subfamily. Part of the signal recognition particle protein translocation system, which is composed of SRP and FtsY. SRP is a ribonucleoprotein composed of Ffh and a 4.5S RNA molecule.

The protein localises to the cytoplasm. It catalyses the reaction GTP + H2O = GDP + phosphate + H(+). Involved in targeting and insertion of nascent membrane proteins into the cytoplasmic membrane. Binds to the hydrophobic signal sequence of the ribosome-nascent chain (RNC) as it emerges from the ribosomes. The SRP-RNC complex is then targeted to the cytoplasmic membrane where it interacts with the SRP receptor FtsY. Interaction with FtsY leads to the transfer of the RNC complex to the Sec translocase for insertion into the membrane, the hydrolysis of GTP by both Ffh and FtsY, and the dissociation of the SRP-FtsY complex into the individual components. The chain is Signal recognition particle protein from Rickettsia typhi (strain ATCC VR-144 / Wilmington).